A 177-amino-acid polypeptide reads, in one-letter code: Protein C2-DOMAIN ABA-RELATED 4 (177 aa).

The 115-residue stretch at 4 to 118 folds into the C2 domain; sequence ACPARTSSLM…LRMQLDGLPS (115 aa). Ca(2+)-binding residues include arginine 33, aspartate 34, aspartate 39, aspartate 85, histidine 86, aspartate 87, and aspartate 93.

It belongs to the plant CAR protein family. Dimers and oligomers. Binds to PYR/PYL/RCAR abscisic acid intracellular receptors in an ABA-independent manner, both at the plasma membrane and in the nucleus. Interacts directly with PYR1, PYL1, PYL4, PYL6 and PYL8. Binds phospholipids in a Ca(2+)-dependent manner. Interacts with YchF1. It depends on Ca(2+) as a cofactor.

The protein localises to the cell membrane. The protein resides in the nucleus. It localises to the cytoplasm. Its subcellular location is the cytosol. In terms of biological role, mediates the transient calcium-dependent interaction of PYR/PYL/RCAR abscisic acid (ABA) receptors with the plasma membrane and thus regulates ABA sensitivity. Stimulates the GTPase/ATPase activities of YchF1, and regulates its subcellular localization. Promotes tolerance towards salinity stress by limiting the accumulation of reactive oxygen species (ROS). Promotes resistance to bacterial pathogens (e.g. Xanthomonas oryzae pv. oryzae and P.syringae pv. tomato DC3000). Binds liposomes in the absence of exogenous Ca(2+), but this activity is enhanced in the presence of Ca(2+) and generates membrane curvature. The chain is Protein C2-DOMAIN ABA-RELATED 4 from Arabidopsis thaliana (Mouse-ear cress).